Reading from the N-terminus, the 488-residue chain is Cardiolipin synthase 2 (488 aa).

2 consecutive transmembrane segments (helical) span residues 8-28 (IIIN…AFII) and 39-59 (IWAW…LYLL). PLD phosphodiesterase domains are found at residues 223-250 (MNNR…GDEY) and 401-428 (DNGF…DNRS). Residues His228, Lys230, Asp235, His406, Lys408, and Asp413 contribute to the active site.

It belongs to the phospholipase D family. Cardiolipin synthase subfamily.

Its subcellular location is the cell membrane. It carries out the reaction 2 a 1,2-diacyl-sn-glycero-3-phospho-(1'-sn-glycerol) = a cardiolipin + glycerol. In terms of biological role, catalyzes the reversible phosphatidyl group transfer from one phosphatidylglycerol molecule to another to form cardiolipin (CL) (diphosphatidylglycerol) and glycerol. This chain is Cardiolipin synthase 2 (cls2), found in Staphylococcus epidermidis (strain ATCC 35984 / DSM 28319 / BCRC 17069 / CCUG 31568 / BM 3577 / RP62A).